The chain runs to 249 residues: 1-(5-phosphoribosyl)-5-[(5-phosphoribosylamino)methylideneamino] imidazole-4-carboxamide isomerase (249 aa).

The active-site Proton acceptor is the D11. The active-site Proton donor is the D133.

This sequence belongs to the HisA/HisF family.

It localises to the cytoplasm. The enzyme catalyses 1-(5-phospho-beta-D-ribosyl)-5-[(5-phospho-beta-D-ribosylamino)methylideneamino]imidazole-4-carboxamide = 5-[(5-phospho-1-deoxy-D-ribulos-1-ylimino)methylamino]-1-(5-phospho-beta-D-ribosyl)imidazole-4-carboxamide. It functions in the pathway amino-acid biosynthesis; L-histidine biosynthesis; L-histidine from 5-phospho-alpha-D-ribose 1-diphosphate: step 4/9. This is 1-(5-phosphoribosyl)-5-[(5-phosphoribosylamino)methylideneamino] imidazole-4-carboxamide isomerase from Actinobacillus succinogenes (strain ATCC 55618 / DSM 22257 / CCUG 43843 / 130Z).